The sequence spans 215 residues: NAD(P)H-hydrate epimerase (215 aa).

The YjeF N-terminal domain occupies 8–212 (MYNIENKGHD…KIGIPPEAEE (205 aa)). 57-61 (NNGGD) is a (6S)-NADPHX binding site. Residues asparagine 58 and aspartate 124 each contribute to the K(+) site. (6S)-NADPHX is bound by residues 128-134 (GTGISGE), tyrosine 139, and aspartate 157. Serine 160 serves as a coordination point for K(+).

It belongs to the NnrE/AIBP family. Requires K(+) as cofactor.

The catalysed reaction is (6R)-NADHX = (6S)-NADHX. It carries out the reaction (6R)-NADPHX = (6S)-NADPHX. Catalyzes the epimerization of the S- and R-forms of NAD(P)HX, a damaged form of NAD(P)H that is a result of enzymatic or heat-dependent hydration. This is a prerequisite for the S-specific NAD(P)H-hydrate dehydratase to allow the repair of both epimers of NAD(P)HX. The protein is NAD(P)H-hydrate epimerase of Nitrosopumilus maritimus (strain SCM1).